We begin with the raw amino-acid sequence, 61 residues long: Probable tautomerase BH3814 (61 aa).

Catalysis depends on P2, which acts as the Proton acceptor; via imino nitrogen.

Belongs to the 4-oxalocrotonate tautomerase family.

The sequence is that of Probable tautomerase BH3814 from Halalkalibacterium halodurans (strain ATCC BAA-125 / DSM 18197 / FERM 7344 / JCM 9153 / C-125) (Bacillus halodurans).